Consider the following 372-residue polypeptide: Cyclin-dependent kinase 9 (372 aa).

Residues 19 to 315 (YEKLAKIGQG…SDDALNHDFF (297 aa)) enclose the Protein kinase domain. 25–33 (IGQGTFGEV) provides a ligand contact to ATP. Lysine 44 carries the post-translational modification N6-acetyllysine; by EP300/CBP, PCAF/KAT2B and GCN5/KAT2A. ATP-binding positions include lysine 48 and 104–106 (DFC). Lysine 48 is modified (N6-acetyllysine; by PCAF/KAT2B and GCN5/KAT2A). Aspartate 149 (proton acceptor) is an active-site residue. Residues 166–191 (ADFGLARAFSLAKNSQPNRYTNRVVT) are T-loop. Aspartate 167 contributes to the ATP binding site. Serine 175 carries the post-translational modification Phosphoserine. The residue at position 186 (threonine 186) is a Phosphothreonine; by CaMK1D. A disordered region spans residues 343–372 (RRKGSQITQQSTNQSRNPATTNQTEFERVF). Serine 347 bears the Phosphoserine; by CDK9 and PKA mark. Positions 347–366 (SQITQQSTNQSRNPATTNQT) are enriched in polar residues. Threonine 350 carries the phosphothreonine; by CDK9 modification. Serine 353 bears the Phosphoserine; by CDK9 mark. Residue threonine 354 is modified to Phosphothreonine; by CDK9. Residue serine 357 is modified to Phosphoserine; by CDK9. Phosphothreonine; by CDK9 occurs at positions 362 and 363.

It belongs to the protein kinase superfamily. CMGC Ser/Thr protein kinase family. CDC2/CDKX subfamily. Component of the super elongation complex (SEC), at least composed of EAF1, EAF2, CDK9, MLLT3/AF9, AFF (AFF1 or AFF4), the P-TEFb complex and ELL (ELL, ELL2 or ELL3). Associates with CCNT1/cyclin-T1, CCNT2/cyclin-T2 (isoform A and isoform B) or CCNK/cyclin-K to form active P-TEFb. P-TEFb forms a complex with AFF4/AF5Q31 and is part of the super elongation complex (SEC). Component of a complex which is composed of at least 5 members: HTATSF1/Tat-SF1, P-TEFb complex, RNA pol II, SUPT5H, and NCL/nucleolin. Associates with UBR5 and forms a transcription regulatory complex composed of CDK9, RNAP II, UBR5 and TFIIS/TCEA1 that can stimulate target gene transcription (e.g. gamma fibrinogen/FGG) by recruiting their promoters. Component of the 7SK snRNP inactive complex which is composed of at least 8 members: P-TEFb (composed of CDK9 and CCNT1/cyclin-T1), HEXIM1, HEXIM2, LARP7, BCDIN3, SART3 proteins and 7SK and U6 snRNAs. This inactive 7SK snRNP complex can also interact with NCOR1 and HDAC3, probably to regulate CDK9 acetylation. Release of P-TEFb from P-TEFb/7SK snRNP complex requires both PP2B to transduce calcium Ca(2+) signaling in response to stimuli (e.g. UV or hexamethylene bisacetamide (HMBA)), and PPP1CA to dephosphorylate Thr-186. This released P-TEFb remains inactive in the pre-initiation complex with BRD4 until new Thr-186 phosphorylation occurs after the synthesis of a short RNA. Interacts with BRD4; to target chromatin binding. Interacts with JMJD6. Interacts with activated nuclear STAT3 and RELA/p65. Binds to AR and MYOD1. Forms a complex composed of CDK9, CCNT1/cyclin-T1, EP300 and GATA4 that stimulates hypertrophy in cardiomyocytes. The large PER complex involved in the repression of transcriptional termination is composed of at least PER2, CDK9, DDX5, DHX9, NCBP1 and POLR2A (active). Interacts with HSF1. Interacts with TBX21. Interacts with WDR43. Interacts with ZMYND8; the association appears to occur between homodimeric ZMYND8 and the activated form of the P-TEFb complex. Post-translationally, autophosphorylation at Thr-186, Ser-347, Thr-350, Ser-353, Thr-354 and Ser-357 triggers kinase activity by promoting cyclin and substrate binding upon conformational changes. Thr-186 phosphorylation requires the calcium Ca(2+) signaling pathway, including CaMK1D and calmodulin. This inhibition is relieved by Thr-29 dephosphorylation. Phosphorylation at Ser-175 inhibits kinase activity. Can be phosphorylated on either Thr-362 or Thr-363 but not on both simultaneously. In terms of processing, dephosphorylation of Thr-186 by PPM1A and PPM1B blocks CDK9 activity and may lead to CDK9 proteasomal degradation. However, PPP1CA-mediated Thr-186 dephosphorylation is required to release P-TEFb from its inactive P-TEFb/7SK snRNP complex. Dephosphorylated at Ser-347 by the PNUTS-PP1 complex during RNA polymerase II transcription pause-release. Dephosphorylation of C-terminus Thr and Ser residues by protein phosphatase-1 (PP1) triggers CDK9 activity. N6-acetylation of Lys-44 promotes kinase activity, whereas acetylation of both Lys-44 and Lys-48 mediated by PCAF/KAT2B and GCN5/KAT2A reduces kinase activity. The acetylated form associates with PML bodies in the nuclear matrix and with the transcriptionally silent HIV-1 genome; deacetylated upon transcription stimulation. Deacetylated by SIRT7, promoting the kinase activity and subsequent 'Ser-2' phosphorylation of the C-terminal domain (CTD) of RNA polymerase II. Post-translationally, polyubiquitinated and thus activated by UBR5. This ubiquitination is promoted by TFIIS/TCEA1 and favors 'Ser-2' phosphorylation of RPB1/POLR2A CTD. As to expression, expressed at high levels in brain and kidney.

It is found in the nucleus. It localises to the cytoplasm. The protein resides in the PML body. The catalysed reaction is L-seryl-[protein] + ATP = O-phospho-L-seryl-[protein] + ADP + H(+). The enzyme catalyses L-threonyl-[protein] + ATP = O-phospho-L-threonyl-[protein] + ADP + H(+). It carries out the reaction [DNA-directed RNA polymerase] + ATP = phospho-[DNA-directed RNA polymerase] + ADP + H(+). Its activity is regulated as follows. Activation by Thr-186 phosphorylation is calcium Ca(2+) signaling pathway-dependent; actively inactivated by dephosphorylation mediated by PPP1CA, PPM1A and PPM1B. Reversibly repressed by acetylation at Lys-44 and Lys-48. Protein kinase involved in the regulation of transcription. Member of the cyclin-dependent kinase pair (CDK9/cyclin-T) complex, also called positive transcription elongation factor b (P-TEFb), which facilitates the transition from abortive to productive elongation by phosphorylating the CTD (C-terminal domain) of the large subunit of RNA polymerase II (RNAP II) POLR2A, SUPT5H and RDBP. This complex is inactive when in the 7SK snRNP complex form. Phosphorylates EP300, MYOD1, RPB1/POLR2A and AR and the negative elongation factors DSIF and NELFE. Regulates cytokine inducible transcription networks by facilitating promoter recognition of target transcription factors (e.g. TNF-inducible RELA/p65 activation and IL-6-inducible STAT3 signaling). Promotes RNA synthesis in genetic programs for cell growth, differentiation and viral pathogenesis. P-TEFb is also involved in cotranscriptional histone modification, mRNA processing and mRNA export. Modulates a complex network of chromatin modifications including histone H2B monoubiquitination (H2Bub1), H3 lysine 4 trimethylation (H3K4me3) and H3K36me3; integrates phosphorylation during transcription with chromatin modifications to control co-transcriptional histone mRNA processing. The CDK9/cyclin-K complex has also a kinase activity towards CTD of RNAP II and can substitute for CDK9/cyclin-T P-TEFb in vitro. Replication stress response protein; the CDK9/cyclin-K complex is required for genome integrity maintenance, by promoting cell cycle recovery from replication arrest and limiting single-stranded DNA amount in response to replication stress, thus reducing the breakdown of stalled replication forks and avoiding DNA damage. In addition, probable function in DNA repair of isoform 2 via interaction with KU70/XRCC6. Promotes cardiac myocyte enlargement. RPB1/POLR2A phosphorylation on 'Ser-2' in CTD activates transcription. AR phosphorylation modulates AR transcription factor promoter selectivity and cell growth. DSIF and NELF phosphorylation promotes transcription by inhibiting their negative effect. The phosphorylation of MYOD1 enhances its transcriptional activity and thus promotes muscle differentiation. Catalyzes phosphorylation of KAT5, promoting KAT5 recruitment to chromatin and histone acetyltransferase activity. The polypeptide is Cyclin-dependent kinase 9 (Cdk9) (Mus musculus (Mouse)).